The following is a 476-amino-acid chain: Glutamate mutase epsilon subunit (476 aa).

Residue arginine 62 participates in L-glutamate binding. Glycine 64 is a binding site for adenosylcob(III)alamin. Residue arginine 96 coordinates L-glutamate. Position 119 (asparagine 119) interacts with adenosylcob(III)alamin. L-glutamate is bound by residues 145–146, glutamate 167, and tyrosine 173; that span reads RH. Proline 176 is an adenosylcob(III)alamin binding site. Residue tyrosine 177 coordinates L-glutamate. 3 residues coordinate adenosylcob(III)alamin: phenylalanine 289, lysine 318, and glutamate 322.

It belongs to the methylaspartate mutase GlmE subunit family. In terms of assembly, heterotetramer composed of 2 epsilon subunits (GlmE) and 2 sigma subunits (GlmS). GlmE exists as a homodimer and GlmS as a monomer. Adenosylcob(III)alamin is required as a cofactor.

It carries out the reaction (2S,3S)-3-methyl-L-aspartate = L-glutamate. It participates in amino-acid degradation; L-glutamate degradation via mesaconate pathway; acetate and pyruvate from L-glutamate: step 1/4. Its function is as follows. Catalyzes the carbon skeleton rearrangement of L-glutamate to L-threo-3-methylaspartate ((2S,3S)-3-methylaspartate). In Halobacterium salinarum (strain ATCC 700922 / JCM 11081 / NRC-1) (Halobacterium halobium), this protein is Glutamate mutase epsilon subunit.